Here is a 103-residue protein sequence, read N- to C-terminus: MANQRIRIRLKAFDHRLIDQSAQEIVDTAKRTGAQVTGPIPLPTRKERFTVLVSPHVNKDARDQYEIRTHKRLVDIVEPTDKTVDALMKLDLAAGVDVQISLG.

The protein belongs to the universal ribosomal protein uS10 family. As to quaternary structure, part of the 30S ribosomal subunit.

Its function is as follows. Involved in the binding of tRNA to the ribosomes. This is Small ribosomal subunit protein uS10 from Alcanivorax borkumensis (strain ATCC 700651 / DSM 11573 / NCIMB 13689 / SK2).